Reading from the N-terminus, the 244-residue chain is Large ribosomal subunit protein uL30A (244 aa).

A disordered region spans residues 1–26 (MAAEKILTPESQLKKSKAQQKTAEQV).

The protein belongs to the universal ribosomal protein uL30 family. Component of the large ribosomal subunit (LSU). Mature yeast ribosomes consist of a small (40S) and a large (60S) subunit. The 40S small subunit contains 1 molecule of ribosomal RNA (18S rRNA) and 33 different proteins (encoded by 57 genes). The large 60S subunit contains 3 rRNA molecules (25S, 5.8S and 5S rRNA) and 46 different proteins (encoded by 81 genes).

It is found in the cytoplasm. Its function is as follows. Component of the ribosome, a large ribonucleoprotein complex responsible for the synthesis of proteins in the cell. The small ribosomal subunit (SSU) binds messenger RNAs (mRNAs) and translates the encoded message by selecting cognate aminoacyl-transfer RNA (tRNA) molecules. The large subunit (LSU) contains the ribosomal catalytic site termed the peptidyl transferase center (PTC), which catalyzes the formation of peptide bonds, thereby polymerizing the amino acids delivered by tRNAs into a polypeptide chain. The nascent polypeptides leave the ribosome through a tunnel in the LSU and interact with protein factors that function in enzymatic processing, targeting, and the membrane insertion of nascent chains at the exit of the ribosomal tunnel. The polypeptide is Large ribosomal subunit protein uL30A (Saccharomyces cerevisiae (strain ATCC 204508 / S288c) (Baker's yeast)).